A 464-amino-acid polypeptide reads, in one-letter code: Tyrosine--tRNA ligase, mitochondrial (464 aa).

Tyrosine 61 serves as a coordination point for L-tyrosine. Aspartate 65 contacts ATP. The 'HIGH' region signature appears at 66–75 (PTADSLHVGN). The L-tyrosine site is built by aspartate 105, tyrosine 209, glutamine 213, aspartate 216, and glutamine 235. The 'KMSKS' region signature appears at 270 to 274 (KFGKS). Lysine 273 is an ATP binding site.

This sequence belongs to the class-I aminoacyl-tRNA synthetase family. As to quaternary structure, homodimer.

The protein resides in the mitochondrion matrix. It carries out the reaction tRNA(Tyr) + L-tyrosine + ATP = L-tyrosyl-tRNA(Tyr) + AMP + diphosphate + H(+). Catalyzes the attachment of tyrosine to tRNA(Tyr) in a two-step reaction: tyrosine is first activated by ATP to form Tyr-AMP and then transferred to the acceptor end of tRNA(Tyr). The polypeptide is Tyrosine--tRNA ligase, mitochondrial (Drosophila melanogaster (Fruit fly)).